Consider the following 764-residue polypeptide: Nucleolar transcription factor 1 (764 aa).

Methionine 1 carries the post-translational modification N-acetylmethionine. The tract at residues 1 to 21 (MNGEADCPTDLEMAAPKGQDR) is disordered. DNA-binding regions (HMG box) lie at residues 112 to 180 (PKKP…ARFR) and 196 to 264 (PEKP…RDYI). Threonine 201 carries the post-translational modification Phosphothreonine. Phosphoserine occurs at positions 273, 336, and 364. The HMG box 3 DNA-binding region spans 298-362 (TKPPPNSYSL…DYEVELLRFL (65 aa)). Positions 370 to 379 (QQRVLGEEKM) are enriched in basic and acidic residues. The interval 370-411 (QQRVLGEEKMLNINKKQTTSPASKKPSQEGGKGGSEKPKRPV) is disordered. A phosphoserine mark is found at serine 389, serine 412, serine 433, serine 435, serine 484, serine 495, serine 546, serine 584, and serine 638. 3 DNA-binding regions (HMG box) span residues 407 to 475 (PKRP…GGER), 482 to 549 (PESP…SEMR), and 568 to 634 (KKPP…DLWV). Residues 456–488 (YKAREAALKAQSERKPGGEREDRGKLPESPKRA) are disordered. Positions 457 to 488 (KAREAALKAQSERKPGGEREDRGKLPESPKRA) are enriched in basic and acidic residues. The segment at 546 to 576 (SEMRAPPAATNSSKKMKFQGEPKKPPMNGYQ) is disordered. The interval 648–764 (YISNKRKNMT…SGDSSDSDSN (117 aa)) is disordered. A compositionally biased stretch (polar residues) spans 664–674 (PKSSRTTLQSK). The segment covering 677–745 (SEEDDDEEDD…DDDEDEDNES (69 aa)) has biased composition (acidic residues). The span at 746 to 758 (EGSSSSSSSSGDS) shows a compositional bias: low complexity.

In terms of assembly, homodimer. Part of Pol I pre-initiation complex (PIC), in which Pol I core assembles with RRN3 and promoter-bound UTBF and SL1/TIF-IB complex. Interacts with TOP2A in the context of Pol I complex. Interacts with TBP. Interacts with TAF1A. Interacts with PHF6. Interacts with CEBPA (isoform 1 and isoform 4). Interacts with DDX11. Interacts with NOP53. Interacts with RASL11A. Interacts with DHX33. Binds to IRS1 and PIK3CA. Interacts with ALKBH2. Phosphorylated and activated by PIK3CA.

It is found in the nucleus. Its subcellular location is the nucleolus. Its function is as follows. Recognizes the ribosomal RNA gene promoter and activates transcription mediated by RNA polymerase I through cooperative interactions with the transcription factor SL1/TIF-IB complex. It binds specifically to the upstream control element. The chain is Nucleolar transcription factor 1 (Ubtf) from Rattus norvegicus (Rat).